The chain runs to 609 residues: Phosphoenolpyruvate carboxykinase [GTP] (609 aa).

Residues arginine 81 and 220 to 222 (YGG) contribute to the substrate site. Lysine 229 and histidine 249 together coordinate Mn(2+). Position 271 (serine 271) interacts with substrate. 272 to 277 (ACGKTN) contacts GTP. The active site involves cysteine 273. Residue aspartate 296 participates in Mn(2+) binding. 387–389 (NSR) provides a ligand contact to substrate. Residues arginine 389, arginine 420, and 515–518 (FGEN) contribute to the GTP site.

This sequence belongs to the phosphoenolpyruvate carboxykinase [GTP] family. Monomer. Mn(2+) serves as cofactor.

It is found in the cytoplasm. The catalysed reaction is oxaloacetate + GTP = phosphoenolpyruvate + GDP + CO2. It participates in carbohydrate biosynthesis; gluconeogenesis. Catalyzes the conversion of oxaloacetate (OAA) to phosphoenolpyruvate (PEP), the rate-limiting step in the metabolic pathway that produces glucose from lactate and other precursors derived from the citric acid cycle. This chain is Phosphoenolpyruvate carboxykinase [GTP], found in Mycobacterium leprae (strain Br4923).